We begin with the raw amino-acid sequence, 332 residues long: Junctional sarcoplasmic reticulum protein 1 (332 aa).

Residues 1–80 (MTTRGLEDLD…EKELAGKEST (80 aa)) form a mediates interaction with CACNA1S region. Disordered regions lie at residues 1–125 (MTTR…PWGD) and 159–332 (APHP…KGRD). Position 51 is a phosphothreonine (threonine 51). Positions 66–76 (GLKKMEKELAG) are enriched in basic and acidic residues. Pro residues-rich tracts occupy residues 98–116 (QAPPPLQPPPPPLQPPPRT) and 177–197 (APKPPVLVSPSGSPQPKPGPP). Over residues 221 to 232 (GGSISEASGEES) the composition is skewed to low complexity. Phosphoserine is present on residues serine 223 and serine 228. Composition is skewed to basic and acidic residues over residues 239-256 (GSQEKPRKEKPSKGEKLK) and 283-307 (RRWEAREGGRRPWGRDSRDLLEHGK).

As to quaternary structure, interacts with CACNA1S, CACNB1 and calsequestrin. In terms of tissue distribution, specifically expressed in skeletal muscle. Detected in skeletal muscle and tongue (at protein level).

It localises to the sarcoplasmic reticulum membrane. The protein localises to the endoplasmic reticulum membrane. In terms of biological role, involved in skeletal muscle excitation/contraction coupling (EC), probably acting as a regulator of the voltage-sensitive calcium channel CACNA1S. EC is a physiological process whereby an electrical signal (depolarization of the plasma membrane) is converted into a chemical signal, a calcium gradient, by the opening of ryanodine receptor calcium release channels. May regulate CACNA1S membrane targeting and activity. This Mus musculus (Mouse) protein is Junctional sarcoplasmic reticulum protein 1 (Jsrp1).